Here is a 181-residue protein sequence, read N- to C-terminus: Der GTPase-activating protein YihI (181 aa).

Residues Met1–Ile73 form a disordered region. The span at Asn22–Glu32 shows a compositional bias: basic and acidic residues. Over residues Ile33–Leu42 the composition is skewed to basic residues. The span at Gln55–Ile67 shows a compositional bias: basic and acidic residues.

It belongs to the YihI family. In terms of assembly, interacts with Der.

Its function is as follows. A GTPase-activating protein (GAP) that modifies Der/EngA GTPase function. May play a role in ribosome biogenesis. This Aliivibrio fischeri (strain ATCC 700601 / ES114) (Vibrio fischeri) protein is Der GTPase-activating protein YihI.